The primary structure comprises 116 residues: Large ribosomal subunit protein uL18 (116 aa).

It belongs to the universal ribosomal protein uL18 family. As to quaternary structure, part of the 50S ribosomal subunit; part of the 5S rRNA/L5/L18/L25 subcomplex. Contacts the 5S and 23S rRNAs.

This is one of the proteins that bind and probably mediate the attachment of the 5S RNA into the large ribosomal subunit, where it forms part of the central protuberance. The polypeptide is Large ribosomal subunit protein uL18 (Acinetobacter baylyi (strain ATCC 33305 / BD413 / ADP1)).